Here is a 481-residue protein sequence, read N- to C-terminus: Protein hedgehog (481 aa).

Residues 1–19 form the signal peptide; sequence MDNQAVSALWSCASATCLS. A propeptide spanning residues 20-90 is cleaved from the precursor; it reads LDAKRHSIEP…LALNFRHAHS (71 aa). The disordered stretch occupies residues 26-56; sequence SIEPNPDGQASPDVNNNNNNHNKSTTTVDAH. A lipid anchor (N-palmitoyl cysteine) is attached at Cys91. Positions 155, 156, 161, 191, 192, 195, and 197 each coordinate Ca(2+). A lipid anchor (Cholesterol glycine ester) is attached at Gly264.

It belongs to the hedgehog family. In terms of assembly, interacts with shf. Post-translationally, the C-terminal part of the hedgehog protein precursor displays an autoproteolysis activity that results in the cleavage of the full-length protein into two parts (N-product and C-product). In addition, the C-terminal part displays a cholesterol transferase activity that results by the covalent attachment of a cholesterol moiety to the C-terminal of the newly generated N-product. The N-product is the active species in both local and long-range signaling, whereas the C-product has no signaling activity. Cholesterylation is required for N-product targeting to lipid rafts and multimerization. In terms of processing, N-palmitoylation by Rasp of the hedgehog N-product, within the secretory pathway, is required for the embryonic and larval patterning activities of the hedgehog signal.

Its subcellular location is the nucleus. The protein resides in the cytoplasm. It is found in the cell membrane. It catalyses the reaction glycyl-L-cysteinyl-[protein] + cholesterol + H(+) = [protein]-C-terminal glycyl cholesterol ester + N-terminal L-cysteinyl-[protein]. The C-terminal part of the hedgehog protein precursor displays an autoproteolysis activity that results in the cleavage of the full-length protein into two parts (N-product and C-product). In addition, the C-terminal part displays a cholesterol transferase activity that results by the covalent attachment of a cholesterol moiety to the C-terminal of the newly generated N-product. Once cleaved, the C-product has no signaling activity and diffuses from the cell. Its function is as follows. The dually lipidated hedgehog protein N-product is a morphogen which is essential for a variety of patterning events during development. Establishes the anterior-posterior axis of the embryonic segments and patterns the larval imaginal disks. Binds to the patched (ptc) receptor, which functions in association with smoothened (smo), to activate the transcription of target genes wingless (wg), decapentaplegic (dpp) and ptc. In the absence of hh, ptc represses the constitutive signaling activity of smo through fused (fu). Essential component of a signaling pathway which regulates the Duox-dependent gut immune response to bacterial uracil; required to activate Cad99C-dependent endosome formation, norpA-dependent Ca2+ mobilization and p38 MAPK, which are essential steps in the Duox-dependent production of reactive oxygen species (ROS) in response to intestinal bacterial infection. During photoreceptor differentiation, it up-regulates transcription of Ubr3, which in turn promotes the hh-signaling pathway by mediating the ubiquitination and degradation of cos. The protein is Protein hedgehog of Drosophila hydei (Fruit fly).